The following is a 339-amino-acid chain: Nicotinate-nucleotide--dimethylbenzimidazole phosphoribosyltransferase (339 aa).

Glu306 serves as the catalytic Proton acceptor.

Belongs to the CobT family.

The catalysed reaction is 5,6-dimethylbenzimidazole + nicotinate beta-D-ribonucleotide = alpha-ribazole 5'-phosphate + nicotinate + H(+). Its pathway is nucleoside biosynthesis; alpha-ribazole biosynthesis; alpha-ribazole from 5,6-dimethylbenzimidazole: step 1/2. In terms of biological role, catalyzes the synthesis of alpha-ribazole-5'-phosphate from nicotinate mononucleotide (NAMN) and 5,6-dimethylbenzimidazole (DMB). The polypeptide is Nicotinate-nucleotide--dimethylbenzimidazole phosphoribosyltransferase (Brucella canis (strain ATCC 23365 / NCTC 10854 / RM-666)).